We begin with the raw amino-acid sequence, 165 residues long: Protein OPG091 (165 aa).

This sequence belongs to the orthopoxvirus OPG091 family.

Its subcellular location is the virion. It localises to the host cytoplasm. Its function is as follows. Contributes to virulence in host but not to replication in cell culture. The protein is Protein OPG091 (OPG091) of Cynomys gunnisoni (Gunnison's prairie dog).